A 184-amino-acid polypeptide reads, in one-letter code: Peptide deformylase (184 aa).

Positions 111 and 154 each coordinate Fe cation. Glutamate 155 is a catalytic residue. Residue histidine 158 coordinates Fe cation.

Belongs to the polypeptide deformylase family. Requires Fe(2+) as cofactor.

It catalyses the reaction N-terminal N-formyl-L-methionyl-[peptide] + H2O = N-terminal L-methionyl-[peptide] + formate. Its function is as follows. Removes the formyl group from the N-terminal Met of newly synthesized proteins. Requires at least a dipeptide for an efficient rate of reaction. N-terminal L-methionine is a prerequisite for activity but the enzyme has broad specificity at other positions. The protein is Peptide deformylase of Macrococcus caseolyticus (strain JCSC5402) (Macrococcoides caseolyticum).